The following is a 254-amino-acid chain: GTP cyclohydrolase III (254 aa).

The protein belongs to the archaeal-type GTP cyclohydrolase family.

It carries out the reaction GTP + 3 H2O = 2-amino-5-formylamino-6-(5-phospho-D-ribosylamino)pyrimidin-4(3H)-one + 2 phosphate + 2 H(+). Catalyzes the formation of 2-amino-5-formylamino-6-ribofuranosylamino-4(3H)-pyrimidinone ribonucleotide monophosphate and inorganic phosphate from GTP. Also has an independent pyrophosphate phosphohydrolase activity. The protein is GTP cyclohydrolase III of Methanobrevibacter smithii (strain ATCC 35061 / DSM 861 / OCM 144 / PS).